The chain runs to 107 residues: MSESSSKSSQPLASKQEKDGTEKRGRGRPRKQPPVSPGTALVGSQKEPSEVPTPKRPRGRPKGSKNKGAAKTRKATTAPGRKPRGRPKKLEKEEEEGISQESSEEEQ.

The interval 1 to 107 is disordered; the sequence is MSESSSKSSQ…ISQESSEEEQ (107 aa). At Ser2 the chain carries N-acetylserine. The residue at position 7 (Lys7) is an N6-acetyllysine. Residue Ser8 is modified to ADP-ribosylserine. At Ser9 the chain carries ADP-ribosylserine; alternate. A Phosphoserine; alternate modification is found at Ser9. Lys15 is subject to N6-acetyllysine; alternate. Lys15 participates in a covalent cross-link: Glycyl lysine isopeptide (Lys-Gly) (interchain with G-Cter in SUMO2); alternate. Positions 15-24 are enriched in basic and acidic residues; that stretch reads KQEKDGTEKR. Positions 21–31 form a DNA-binding region, a.T hook 1; it reads TEKRGRGRPRK. Residue Arg26 is modified to Asymmetric dimethylarginine; alternate. An Omega-N-methylarginine; alternate modification is found at Arg26. Arg26 bears the Symmetric dimethylarginine; alternate mark. Phosphoserine; by HIPK2 and CDC2 is present on Ser36. Thr39 is subject to Phosphothreonine. 2 positions are modified to phosphoserine: Ser44 and Ser49. A Phosphothreonine; by HIPK2 and CDC2 modification is found at Thr53. 2 DNA-binding regions (a.T hook) span residues 53-63 and 78-89; these read TPKRPRGRPKG and APGRKPRGRPKK. Positions 53 to 77 are interaction with HIPK2; that stretch reads TPKRPRGRPKGSKNKGAAKTRKATT. Residues 55–74 show a composition bias toward basic residues; the sequence is KRPRGRPKGSKNKGAAKTRK. Asymmetric dimethylarginine; by PRMT6; alternate occurs at positions 58 and 60. 2 positions are modified to omega-N-methylarginine; by PRMT6; alternate: Arg58 and Arg60. Residues 93 to 107 show a composition bias toward acidic residues; sequence EEEEGISQESSEEEQ. A phosphoserine mark is found at Ser99, Ser102, and Ser103.

This sequence belongs to the HMGA family. As to quaternary structure, interacts with HIPK2. Post-translationally, isoforms HMG-I and HMG-Y can be phosphorylated by HIPK2. Phosphorylation may modulate DNA-binding affinity. In terms of processing, methylation at Arg-58 is mutually exclusive with methylation at Arg-60.

It localises to the nucleus. The protein localises to the chromosome. Functionally, HMG-I/Y bind preferentially to the minor groove of A+T rich regions in double-stranded DNA. It is suggested that these proteins could function in nucleosome phasing and in the 3'-end processing of mRNA transcripts. They are also involved in the transcription regulation of genes containing, or in close proximity to A+T-rich regions. This chain is High mobility group protein HMG-I/HMG-Y (HMGA1), found in Cricetulus griseus (Chinese hamster).